Consider the following 360-residue polypeptide: Histidinol-phosphate aminotransferase (360 aa).

Lys-213 carries the N6-(pyridoxal phosphate)lysine modification.

The protein belongs to the class-II pyridoxal-phosphate-dependent aminotransferase family. Histidinol-phosphate aminotransferase subfamily. Homodimer. Requires pyridoxal 5'-phosphate as cofactor.

It catalyses the reaction L-histidinol phosphate + 2-oxoglutarate = 3-(imidazol-4-yl)-2-oxopropyl phosphate + L-glutamate. The protein operates within amino-acid biosynthesis; L-histidine biosynthesis; L-histidine from 5-phospho-alpha-D-ribose 1-diphosphate: step 7/9. This is Histidinol-phosphate aminotransferase from Baumannia cicadellinicola subsp. Homalodisca coagulata.